The sequence spans 190 residues: Elongation factor P-like protein (190 aa).

This sequence belongs to the elongation factor P family.

The polypeptide is Elongation factor P-like protein (Cronobacter sakazakii (strain ATCC BAA-894) (Enterobacter sakazakii)).